Consider the following 238-residue polypeptide: Small ribosomal subunit protein uS2c (238 aa).

This sequence belongs to the universal ribosomal protein uS2 family.

The protein resides in the plastid. The protein localises to the chloroplast. The sequence is that of Small ribosomal subunit protein uS2c (rps2) from Oltmannsiellopsis viridis (Marine flagellate).